We begin with the raw amino-acid sequence, 603 residues long: Protein SHORT-ROOT 2 (603 aa).

2 disordered regions span residues 11-58 (HHHH…HSHS) and 106-140 (DFSSSSSSRQFHSGTGAPSSAPVPPPPSATTSSAG). A compositionally biased stretch (low complexity) spans 31–44 (SYPSSRGSTSSPSS). The segment covering 45–58 (HHTHNHTYYHHSHS) has biased composition (basic residues). Over residues 108–125 (SSSSSSRQFHSGTGAPSS) the composition is skewed to low complexity. The region spanning 179-602 (AAPSSSGRWA…QPVVWASAWK (424 aa)) is the GRAS domain. Positions 186 to 249 (RWAAQLLMEC…LTTSGPRTLR (64 aa)) are leucine repeat I (LRI). The interval 268–354 (ALKFQELSPW…DTPHLSITTV (87 aa)) is VHIID. Positions 318-322 (LHILD) match the VHIID motif. Residues 370-406 (EIGQRLEKFARLMGVPFSFRAVHHAGDLADLDLAALD) are leucine repeat II (LRII). The tract at residues 416–514 (LAVNCVNALR…ERAVGRAIVD (99 aa)) is PFYRE. The interval 517–602 (SCPASQSAER…QPVVWASAWK (86 aa)) is SAW.

It belongs to the GRAS family. As to quaternary structure, does not interact with SCR1.

It localises to the nucleus. Its function is as follows. Putative transcription factor involved in asymmetric cell division. In Oryza sativa subsp. indica (Rice), this protein is Protein SHORT-ROOT 2 (SHR2).